The following is a 224-amino-acid chain: MKPAWALLRLASPQLPIGGYSYSQGLEWAIDSGLIQDADAAERWLADQLTLNLARFEAPLLLAHCRAAHEGNWPHLQELAERHRASRETRELALESRQMGYSLRQLLEGLPELDEAARELLASHHEPGLALAWALAARAWQITPDDALAAWLWGWLENQLAVLMKVLPLGQQAAQRLTSRLLPTLEAAQQQAASLSPEHWGSAAFGLALASMAHERQYSRLFRS.

It belongs to the UreF family. UreD, UreF and UreG form a complex that acts as a GTP-hydrolysis-dependent molecular chaperone, activating the urease apoprotein by helping to assemble the nickel containing metallocenter of UreC. The UreE protein probably delivers the nickel.

It localises to the cytoplasm. In terms of biological role, required for maturation of urease via the functional incorporation of the urease nickel metallocenter. In Ectopseudomonas mendocina (strain ymp) (Pseudomonas mendocina), this protein is Urease accessory protein UreF.